A 913-amino-acid chain; its full sequence is Calcium-activated chloride channel regulator 1 (913 aa).

A signal peptide spans 1–21 (MESLKSPVFLLILHLLEGVLS). The segment at 46 to 199 (DEALIQHIKD…AITGKNQVRR (154 aa)) is metalloprotease domain. A Zn(2+)-binding site is contributed by histidine 156. Glutamate 157 is an active-site residue. Histidine 160 and asparagine 167 together coordinate Zn(2+). The 170-residue stretch at 307–476 (IVCLVLDKSG…NGLVDAFAAL (170 aa)) folds into the VWFA domain. N-linked (GlcNAc...) asparagine glycosylation is found at asparagine 504, asparagine 770, asparagine 804, asparagine 810, asparagine 836, and asparagine 887.

Belongs to the CLCR family. In terms of processing, the 110 kDa translation product is autoproteolytically cleaved by the metalloprotease domain in the endoplasmic reticulum into a 75 kDa N-terminal and a 35 kDa C-terminal products that remain physically associated with each other. The cleavage is necessary for calcium-activated chloride channel (CaCC) activation activity. Post-translationally, glycosylated. As to expression, exclusively expressed in the digestive and respiratory tracts and in the uterus (at protein level). Expressed in small intestine, colon, stomach, and uterus and slightly expressed in trachea tissue. Exclusively expressed in the mucin granule membranes of gastrointestinal, respiratory, and uterine goblet cells and other mucin-producing cells. In the colon, expressed in the surface mucous cells. In the stomach highly expressed in the surface epithelium in the pylorus. Strongly expressed in the airway epithelium of lung tissues associated with airway hyperresponsiveness (AHR).

It localises to the secreted. The protein localises to the extracellular space. May be involved in mediating calcium-activated chloride conductance. May play critical roles in goblet cell metaplasia, mucus hypersecretion, cystic fibrosis and AHR. May be involved in the regulation of mucus production and/or secretion by goblet cells. Involved in the regulation of tissue inflammation in the innate immune response. May play a role as a tumor suppressor. Induces MUC5AC. The sequence is that of Calcium-activated chloride channel regulator 1 (Clca1) from Mus musculus (Mouse).